A 443-amino-acid polypeptide reads, in one-letter code: ATP-dependent protease ATPase subunit HslU (443 aa).

Residues Val18 and 60–65 each bind ATP; that span reads GVGKTE. The tract at residues 136–158 is disordered; it reads LPPPRDFNEDSQRTNADSSTRQL. Positions 148–157 are enriched in polar residues; the sequence is RTNADSSTRQ. ATP is bound by residues Asp256, Glu321, and Arg393.

It belongs to the ClpX chaperone family. HslU subfamily. In terms of assembly, a double ring-shaped homohexamer of HslV is capped on each side by a ring-shaped HslU homohexamer. The assembly of the HslU/HslV complex is dependent on binding of ATP.

It localises to the cytoplasm. ATPase subunit of a proteasome-like degradation complex; this subunit has chaperone activity. The binding of ATP and its subsequent hydrolysis by HslU are essential for unfolding of protein substrates subsequently hydrolyzed by HslV. HslU recognizes the N-terminal part of its protein substrates and unfolds these before they are guided to HslV for hydrolysis. In Marinobacter nauticus (strain ATCC 700491 / DSM 11845 / VT8) (Marinobacter aquaeolei), this protein is ATP-dependent protease ATPase subunit HslU.